Here is a 237-residue protein sequence, read N- to C-terminus: Endonuclease V (237 aa).

Mg(2+) is bound by residues D46 and D114.

Belongs to the endonuclease V family. The cofactor is Mg(2+).

Its subcellular location is the cytoplasm. The enzyme catalyses Endonucleolytic cleavage at apurinic or apyrimidinic sites to products with a 5'-phosphate.. Functionally, DNA repair enzyme involved in the repair of deaminated bases. Selectively cleaves double-stranded DNA at the second phosphodiester bond 3' to a deoxyinosine leaving behind the intact lesion on the nicked DNA. The polypeptide is Endonuclease V (Xanthomonas oryzae pv. oryzae (strain PXO99A)).